The primary structure comprises 377 residues: Alanine racemase (377 aa).

The Proton acceptor; specific for D-alanine role is filled by Lys35. The residue at position 35 (Lys35) is an N6-(pyridoxal phosphate)lysine. Arg130 provides a ligand contact to substrate. Tyr260 serves as the catalytic Proton acceptor; specific for L-alanine. Substrate is bound at residue Met312.

It belongs to the alanine racemase family. Requires pyridoxal 5'-phosphate as cofactor.

It catalyses the reaction L-alanine = D-alanine. The protein operates within amino-acid biosynthesis; D-alanine biosynthesis; D-alanine from L-alanine: step 1/1. In terms of biological role, catalyzes the interconversion of L-alanine and D-alanine. May also act on other amino acids. The protein is Alanine racemase (alr) of Leptothrix cholodnii (strain ATCC 51168 / LMG 8142 / SP-6) (Leptothrix discophora (strain SP-6)).